Here is a 194-residue protein sequence, read N- to C-terminus: Recombination protein RecR (194 aa).

The C4-type zinc finger occupies 55–70; it reads CRECGNLAEGELCPIC. One can recognise a Toprim domain in the interval 78–171; that stretch reads SLLAVVESVA…RVTRPAYGLP (94 aa).

This sequence belongs to the RecR family.

May play a role in DNA repair. It seems to be involved in an RecBC-independent recombinational process of DNA repair. It may act with RecF and RecO. The protein is Recombination protein RecR of Thermus thermophilus (strain ATCC BAA-163 / DSM 7039 / HB27).